The sequence spans 882 residues: DNA mismatch repair protein MutS (882 aa).

640-647 (GPNMGGKS) provides a ligand contact to ATP.

The protein belongs to the DNA mismatch repair MutS family.

This protein is involved in the repair of mismatches in DNA. It is possible that it carries out the mismatch recognition step. This protein has a weak ATPase activity. This is DNA mismatch repair protein MutS from Albidiferax ferrireducens (strain ATCC BAA-621 / DSM 15236 / T118) (Rhodoferax ferrireducens).